We begin with the raw amino-acid sequence, 276 residues long: B3 domain-containing protein REM22 (276 aa).

Positions 11 to 115 (SETMSIQDTV…VFHFCVYEYG (105 aa)) form a DNA-binding region, TF-B3. The interval 141–164 (GNEESTKGLEESPRRGGTSRRRAK) is disordered. Positions 144–154 (ESTKGLEESPR) are enriched in basic and acidic residues.

The protein resides in the nucleus. The sequence is that of B3 domain-containing protein REM22 (REM22) from Arabidopsis thaliana (Mouse-ear cress).